The sequence spans 253 residues: UDP-Glc:alpha-D-GlcNAc-diphosphoundecaprenol beta-1,3-glucosyltransferase WfgD (253 aa).

Belongs to the glycosyltransferase 2 family. It depends on Mn(2+) as a cofactor. Requires Mg(2+) as cofactor.

The protein localises to the cell inner membrane. The enzyme catalyses N-acetyl-alpha-D-glucosaminyl-di-trans,octa-cis-undecaprenyl diphosphate + UDP-alpha-D-glucose = beta-D-Glc-(1-&gt;3)-alpha-D-GlcNAc-di-trans,octa-cis-undecaprenyl diphosphate + UDP + H(+). It functions in the pathway bacterial outer membrane biogenesis; lipopolysaccharide biosynthesis. Its function is as follows. Catalyzes the addition of Glc, the second sugar moiety of the O152-antigen repeating unit, to GlcNAc-pyrophosphate-undecaprenol. The sequence is that of UDP-Glc:alpha-D-GlcNAc-diphosphoundecaprenol beta-1,3-glucosyltransferase WfgD (wfgD) from Escherichia coli.